A 261-amino-acid chain; its full sequence is Bidirectional sugar transporter SWEET1b (261 aa).

Over 1–6 (MEDLAK) the chain is Extracellular. Residues 7 to 27 (FLFGVSGNVIALFLFLSPVPT) traverse the membrane as a helical segment. The MtN3/slv 1 domain occupies 7-95 (FLFGVSGNVI…VVFLVFASTH (89 aa)). At 28 to 42 (FWRIIRRKSTEDFSG) the chain is on the cytoplasmic side. Residues 43–63 (VPYNMTLINCLLSAWYGLPFV) traverse the membrane as a helical segment. At 64-71 (SPNNILVS) the chain is on the extracellular side. The helical transmembrane segment at 72–92 (TINGAGAVIETAYVVVFLVFA) threads the bilayer. Residues 93-101 (STHKTRLRT) are Cytoplasmic-facing. The helical transmembrane segment at 102–122 (LGLAAAVASVFAAVALVSLLA) threads the bilayer. Residues 123–129 (LHGQHRK) are Extracellular-facing. The helical transmembrane segment at 130–150 (LLCGVAATVCSICMYASPLSI) threads the bilayer. The MtN3/slv 2 domain maps to 133-215 (GVAATVCSIC…VLYAIYRNNK (83 aa)). Residues 151-164 (MRLVIKTKSVEYMP) are Cytoplasmic-facing. Residues 165–185 (FLMSLAVFLCGTSWFIYGLLG) form a helical membrane-spanning segment. Over 186-189 (RDPF) the chain is Extracellular. A helical transmembrane segment spans residues 190 to 210 (VTIPNGCGSFLGAVQLVLYAI). Residues 211–261 (YRNNKGAGGGSGGKQAGDDDVEMAEGRNNKVADGGAADDDSTAGGKAGTEV) are Cytoplasmic-facing. Residues 218–261 (GGGSGGKQAGDDDVEMAEGRNNKVADGGAADDDSTAGGKAGTEV) form a disordered region.

This sequence belongs to the SWEET sugar transporter family. Forms homodimers. In terms of tissue distribution, highly expressed in leaves. Expressed at very low levels in roots, stems and panicles.

Its subcellular location is the cell membrane. The enzyme catalyses D-glucose(out) = D-glucose(in). It carries out the reaction D-galactose(in) = D-galactose(out). Functionally, mediates transport of sugars across the plasma membrane. Can transport glucose and galactose, but not fructose, mannose and sucrose. This Oryza sativa subsp. japonica (Rice) protein is Bidirectional sugar transporter SWEET1b (SWEET1B).